Here is a 273-residue protein sequence, read N- to C-terminus: Zinc finger protein 32 (273 aa).

C2H2-type zinc fingers lie at residues 77–99, 105–127, and 133–155; these read YECQ…ERIH, FECT…QRIH, and YQCK…ERLH. Cys79, Cys82, His95, His99, Cys107, Cys110, His123, His127, Ser141, Gln144, Gly157, Tyr161, Phe198, Lys201, Leu214, Ala218, Cys247, Cys250, His263, and Cys267 together coordinate Zn(2+). 2 consecutive C2H2-type zinc fingers follow at residues 161–183 and 189–211; these read YECA…RRVH and YRCD…IRVH. The segment at 217–239 adopts a C2H2-type 6 zinc-finger fold; sequence YACTQCRKSFHTRGNCILHGKIH. A CCHC-type zinc finger spans residues 245–267; it reads YLCGQCGKSFTQRGSLAVHQRSC.

Belongs to the krueppel C2H2-type zinc-finger protein family.

The protein localises to the nucleus. May be involved in transcriptional regulation. This chain is Zinc finger protein 32 (ZNF32), found in Homo sapiens (Human).